We begin with the raw amino-acid sequence, 389 residues long: MNTAVNVNVVHESEAQRQFARVKLPARIRYIGANREGVDARLLDLSAGGFAFTASGAPIQPGDLYKGKLLFQVDSISFSLEVEFQVRSVDPASRRVGCEFQNLKPREVAALRYLITSYLAGEVIGVGDMLNTLQRENFTKARKQGGGNGGMGFFGRVRAVTLSTAIFVVGVGAFAFILNQMYNLYFVTHADSGVVSVPNQQITMPREGTVQSLLGPNAEVAKGAPIATFSANLLDMLKGNLTEEQLNPGNIEKLFGHQMKGTLTSPCDCRVVQQLVADGQYANKGQVIFTLAPRDSVASIEARFPYRNAAELAPGTRVNFQVAGDGVNRSGRIVNTAPVDGDLSSEIRVQIQPDQPLDAQYAGRPAEVSIGGLPGRTLLNKAVTLATAR.

One can recognise a PilZ domain in the interval 16–116 (QRQFARVKLP…EVAALRYLIT (101 aa)).

Belongs to the Alg44 family.

The protein resides in the periplasm. The enzyme catalyses [(1-&gt;4)-beta-D-mannuronosyl](n) + GDP-alpha-D-mannuronate = [(1-&gt;4)-beta-D-mannuronosyl](n+1) + GDP + H(+). It functions in the pathway glycan biosynthesis; alginate biosynthesis. Its function is as follows. Required for alginate biosynthesis. The sequence is that of Mannuronan synthase (alg44) from Pseudomonas aeruginosa (strain ATCC 15692 / DSM 22644 / CIP 104116 / JCM 14847 / LMG 12228 / 1C / PRS 101 / PAO1).